The chain runs to 156 residues: Small ribosomal subunit protein uS7 (156 aa).

The protein belongs to the universal ribosomal protein uS7 family. Part of the 30S ribosomal subunit. Contacts proteins S9 and S11.

Functionally, one of the primary rRNA binding proteins, it binds directly to 16S rRNA where it nucleates assembly of the head domain of the 30S subunit. Is located at the subunit interface close to the decoding center, probably blocks exit of the E-site tRNA. The chain is Small ribosomal subunit protein uS7 from Methylibium petroleiphilum (strain ATCC BAA-1232 / LMG 22953 / PM1).